A 424-amino-acid chain; its full sequence is UPF0597 protein Sbal223_1296 (424 aa).

The protein belongs to the UPF0597 family.

The polypeptide is UPF0597 protein Sbal223_1296 (Shewanella baltica (strain OS223)).